The following is a 689-amino-acid chain: Beta-adrenergic receptor kinase 1 (689 aa).

Residues 1-190 (MADLEAVLAD…ELNIHLTMND (190 aa)) are N-terminal. The 122-residue stretch at 54-175 (TFEKIFSQKL…IESDKFTRFC (122 aa)) folds into the RGS domain. The 263-residue stretch at 191–453 (FSVHRIIGRG…AQEVKESPFF (263 aa)) folds into the Protein kinase domain. Residues 197 to 205 (IGRGGFGEV) and Lys-220 each bind ATP. The Proton acceptor role is filled by Asp-317. The AGC-kinase C-terminal domain maps to 454 to 521 (RSLDWQMVFL…TISERWQQEV (68 aa)). In terms of domain architecture, PH spans 558–652 (DCIMHGYMSK…WKKELRDAYR (95 aa)). At Ser-670 the chain carries Phosphoserine.

Belongs to the protein kinase superfamily. AGC Ser/Thr protein kinase family. GPRK subfamily. As to quaternary structure, interacts with the heterodimer formed by GNB1 and GNG2. Interacts with GIT1. Interacts with, and phosphorylates chemokine-stimulated CCR5. Interacts with ARRB1. Interacts with LPAR1 and LPAR2. Interacts with RALA in response to LPAR1 activation. ADRBK1 and RALA mutually inhibit each other's binding to LPAR1. Interacts with ADRB2. Expressed in peripheral blood leukocytes.

Its subcellular location is the cytoplasm. It is found in the cell membrane. The protein resides in the postsynapse. It localises to the presynapse. It carries out the reaction [beta-adrenergic receptor] + ATP = [beta-adrenergic receptor]-phosphate + ADP + H(+). With respect to regulation, in contrast to other AGC family kinases, the catalytic activity is solely regulated by the binding of substrates and ligands, not by phosphorylation of the kinase domain. Functionally, specifically phosphorylates the agonist-occupied form of the beta-adrenergic and closely related receptors, probably inducing a desensitization of them. Key regulator of LPAR1 signaling. Competes with RALA for binding to LPAR1 thus affecting the signaling properties of the receptor. Desensitizes LPAR1 and LPAR2 in a phosphorylation-independent manner. Positively regulates ciliary smoothened (SMO)-dependent Hedgehog (Hh) signaling pathway by facilitating the trafficking of SMO into the cilium and the stimulation of SMO activity. Inhibits relaxation of airway smooth muscle in response to blue light. This is Beta-adrenergic receptor kinase 1 from Homo sapiens (Human).